Consider the following 269-residue polypeptide: Tryptophan synthase alpha chain (269 aa).

Active-site proton acceptor residues include E50 and D61.

This sequence belongs to the TrpA family. In terms of assembly, tetramer of two alpha and two beta chains.

The catalysed reaction is (1S,2R)-1-C-(indol-3-yl)glycerol 3-phosphate + L-serine = D-glyceraldehyde 3-phosphate + L-tryptophan + H2O. It participates in amino-acid biosynthesis; L-tryptophan biosynthesis; L-tryptophan from chorismate: step 5/5. Functionally, the alpha subunit is responsible for the aldol cleavage of indoleglycerol phosphate to indole and glyceraldehyde 3-phosphate. This Francisella tularensis subsp. tularensis (strain FSC 198) protein is Tryptophan synthase alpha chain.